Consider the following 707-residue polypeptide: Choline transporter-like protein 4 (707 aa).

The Cytoplasmic segment spans residues 1-32 (MGRKQNENEAHGNSAKYDPSFRGPIKNRGCTD). A helical membrane pass occupies residues 33 to 53 (IICCVLFLIFILGYIIVGLVA). The Extracellular segment spans residues 54–227 (WVYGDPRQVL…KIFEDFAQSW (174 aa)). 4 N-linked (GlcNAc...) asparagine glycosylation sites follow: Asn-67, Asn-185, Asn-195, and Asn-196. The helical transmembrane segment at 228–248 (YWILVALGVALALSLLFILLL) threads the bilayer. Over 249–250 (RL) the chain is Cytoplasmic. Residues 251 to 271 (VAAPLVLLLIVGVLAVLAYGI) form a helical membrane-spanning segment. Over 272-307 (YHCWQQYQVFRDKGASITQLGFTTNFSAYQSVKETW) the chain is Extracellular. The N-linked (GlcNAc...) asparagine glycan is linked to Asn-296. Residues 308–328 (LAALIVLAVLEGILLLMLIFL) traverse the membrane as a helical segment. Residues 329–356 (RQRIRIAIALLKEASRAVGQMMSTMFYP) lie on the Cytoplasmic side of the membrane. A helical membrane pass occupies residues 357–377 (LVTFVLLVICIGYWAVTALYL). Residues 378 to 452 (ATSGQPQYIY…GVLGLFWTVN (75 aa)) lie on the Extracellular side of the membrane. N-linked (GlcNAc...) asparagine glycans are attached at residues Asn-391, Asn-403, and Asn-413. A helical transmembrane segment spans residues 453-473 (WVLALGQCVLAGAFASFYWAF). The Cytoplasmic portion of the chain corresponds to 474–498 (HKPRDIPTFPLSSAFIRTLRYHTGS). Residues 499–519 (LAFGALILSLVQIARVILEYI) traverse the membrane as a helical segment. Over 520–557 (DHKLRGSQNPVARCIICCFKCCLWCLEKFIKFLNRNAY) the chain is Extracellular. A helical membrane pass occupies residues 558–578 (IMIAIYGKNFCVSAKNAFMLL). Topologically, residues 579–594 (MRNVLRVVVLDKVTDL) are cytoplasmic. The chain crosses the membrane as a helical span at residues 595 to 615 (LLFFGKLLVVGGVGVLSFFFF). The Extracellular segment spans residues 616–635 (SGRIKGLGKDFENPNLNYYW). The chain crosses the membrane as a helical span at residues 636 to 656 (LPIMTSIMGAYVIASGFFSVF). Topologically, residues 657–707 (GMCVDTLFLCFLEDLERNDGSQERPYYMPKALLKILGKKNEAPTGGKTRKK) are cytoplasmic.

The protein belongs to the CTL (choline transporter-like) family. In terms of processing, N-glycosylated; N-glycosylation of Asn-67 and Asn-391 is required for a proper thiamine pyrophosphate uptake. Expressed in colon and cecum.

The protein resides in the membrane. It is found in the apical cell membrane. The catalysed reaction is choline(out) + n H(+)(in) = choline(in) + n H(+)(out). It carries out the reaction thiamine diphosphate(out) = thiamine diphosphate(in). Choline transporter that plays a role in the choline-acetylcholine system and is required to the efferent innervation of hair cells in the olivocochlear bundle for the maintenance of physiological function of outer hair cells and the protection of hair cells from acoustic injury. Also described as a thiamine pyrophosphate transporter in colon, may mediate the absorption of microbiota-generated thiamine pyrophosphate and contribute to host thiamine (vitamin B1) homeostasis. This is Choline transporter-like protein 4 from Mus musculus (Mouse).